The primary structure comprises 122 residues: Small ribosomal subunit protein uS13 (122 aa).

Residues 98–122 (VRGQRTHTNARTRKGPAKAIAGKKK) form a disordered region.

The protein belongs to the universal ribosomal protein uS13 family. As to quaternary structure, part of the 30S ribosomal subunit. Forms a loose heterodimer with protein S19. Forms two bridges to the 50S subunit in the 70S ribosome.

Its function is as follows. Located at the top of the head of the 30S subunit, it contacts several helices of the 16S rRNA. In the 70S ribosome it contacts the 23S rRNA (bridge B1a) and protein L5 of the 50S subunit (bridge B1b), connecting the 2 subunits; these bridges are implicated in subunit movement. Contacts the tRNAs in the A and P-sites. The sequence is that of Small ribosomal subunit protein uS13 from Ruegeria pomeroyi (strain ATCC 700808 / DSM 15171 / DSS-3) (Silicibacter pomeroyi).